The chain runs to 38 residues: Large ribosomal subunit protein bL36 (38 aa).

It belongs to the bacterial ribosomal protein bL36 family.

The protein is Large ribosomal subunit protein bL36 of Prochlorococcus marinus (strain MIT 9312).